The sequence spans 195 residues: Anticoagulant protein rhipilin-2 (195 aa).

The signal sequence occupies residues 1 to 20; the sequence is MVLCCFALLITAVLVASKGA. The BPTI/Kunitz inhibitor domain occupies 26-87; sequence CDPDHENKKV…PSIEDCLSNC (62 aa). Cystine bridges form between Cys26/Cys87, Cys39/Cys70, and Cys62/Cys83.

Primarily expressed in salivary glands and weakly expressed in the midgut of fed ticks.

The protein localises to the secreted. Functionally, anticoagulant protein that inhibits the serine proteases trypsin and elastase, but not thrombin. The anticoagulant effect of this recombinant protein on blood clotting is found only in the activated partial thromboplastin time (APTT) assays, but not in the prothrombin time (PT) assays. In Rhipicephalus haemaphysaloides (Tick), this protein is Anticoagulant protein rhipilin-2.